A 448-amino-acid polypeptide reads, in one-letter code: Exodeoxyribonuclease 7 large subunit (448 aa).

Belongs to the XseA family. Heterooligomer composed of large and small subunits.

It is found in the cytoplasm. The enzyme catalyses Exonucleolytic cleavage in either 5'- to 3'- or 3'- to 5'-direction to yield nucleoside 5'-phosphates.. In terms of biological role, bidirectionally degrades single-stranded DNA into large acid-insoluble oligonucleotides, which are then degraded further into small acid-soluble oligonucleotides. The chain is Exodeoxyribonuclease 7 large subunit from Alcanivorax borkumensis (strain ATCC 700651 / DSM 11573 / NCIMB 13689 / SK2).